The chain runs to 439 residues: tRNA-2-methylthio-N(6)-dimethylallyladenosine synthase (439 aa).

One can recognise an MTTase N-terminal domain in the interval 5–121; the sequence is KKLFIKTYGC…LPELEAKTRA (117 aa). [4Fe-4S] cluster is bound by residues cysteine 14, cysteine 50, cysteine 84, cysteine 159, cysteine 163, and cysteine 166. The Radical SAM core domain maps to 145-378; that stretch reads AKRGPTAFLT…ITRHQREIQD (234 aa). The TRAM domain maps to 378-439; it reads DGMVGREVSV…GANSLAGELA (62 aa).

Belongs to the methylthiotransferase family. MiaB subfamily. As to quaternary structure, monomer. It depends on [4Fe-4S] cluster as a cofactor.

It is found in the cytoplasm. The enzyme catalyses N(6)-dimethylallyladenosine(37) in tRNA + (sulfur carrier)-SH + AH2 + 2 S-adenosyl-L-methionine = 2-methylsulfanyl-N(6)-dimethylallyladenosine(37) in tRNA + (sulfur carrier)-H + 5'-deoxyadenosine + L-methionine + A + S-adenosyl-L-homocysteine + 2 H(+). Functionally, catalyzes the methylthiolation of N6-(dimethylallyl)adenosine (i(6)A), leading to the formation of 2-methylthio-N6-(dimethylallyl)adenosine (ms(2)i(6)A) at position 37 in tRNAs that read codons beginning with uridine. The chain is tRNA-2-methylthio-N(6)-dimethylallyladenosine synthase from Ruegeria pomeroyi (strain ATCC 700808 / DSM 15171 / DSS-3) (Silicibacter pomeroyi).